We begin with the raw amino-acid sequence, 290 residues long: Serpentine receptor class U-26 (290 aa).

7 helical membrane-spanning segments follow: residues 31 to 51 (LPML…IIIL), 70 to 90 (LLSA…ADFL), 112 to 134 (FITI…PFLV), 158 to 178 (FSIP…FPAI), 185 to 205 (AYPF…FGLV), 213 to 233 (NTLF…LLLI), and 262 to 282 (MIFS…LHIV).

This sequence belongs to the nematode receptor-like protein sru family.

The protein resides in the membrane. The polypeptide is Serpentine receptor class U-26 (sru-26) (Caenorhabditis elegans).